The chain runs to 200 residues: Lipopolysaccharide core heptose(II)-phosphate phosphatase (200 aa).

Positions 1–25 (MLAFCRSSLKSKKYFIILLALAAIA) are cleaved as a signal peptide.

The protein belongs to the phosphoglycerate mutase family. Ais subfamily.

It is found in the periplasm. Its pathway is bacterial outer membrane biogenesis; lipopolysaccharide metabolism. In terms of biological role, catalyzes the dephosphorylation of heptose(II) of the outer membrane lipopolysaccharide core. In Escherichia coli O6:H1 (strain CFT073 / ATCC 700928 / UPEC), this protein is Lipopolysaccharide core heptose(II)-phosphate phosphatase.